The following is a 99-amino-acid chain: Large ribosomal subunit protein bL28 (99 aa).

This sequence belongs to the bacterial ribosomal protein bL28 family.

This is Large ribosomal subunit protein bL28 from Rhodospirillum rubrum (strain ATCC 11170 / ATH 1.1.1 / DSM 467 / LMG 4362 / NCIMB 8255 / S1).